A 147-amino-acid polypeptide reads, in one-letter code: Hemoglobin subunit gamma-1 (147 aa).

The residue at position 2 (glycine 2) is an N-acetylglycine. The Globin domain occupies 3–147 (HFTEEDKATI…VASALSSRYH (145 aa)). Threonine 13 is modified (phosphothreonine). 3 positions are modified to phosphoserine: serine 45, serine 51, and serine 53. Position 60 is an N6-acetyllysine (lysine 60). Histidine 64 provides a ligand contact to heme b. Residue lysine 83 is modified to N6-acetyllysine. Histidine 93 provides a ligand contact to heme b. Cysteine 94 is modified (S-nitrosocysteine). A Phosphoserine modification is found at serine 140.

The protein belongs to the globin family. In terms of assembly, heterotetramer of two alpha chains and two gamma chains in fetal hemoglobin (Hb F). As to expression, red blood cells.

Its function is as follows. Gamma chains make up the fetal hemoglobin F, in combination with alpha chains. This is Hemoglobin subunit gamma-1 (HBG1) from Pongo pygmaeus (Bornean orangutan).